The sequence spans 128 residues: B2 protein (128 aa).

Residues S1–A10 form the signal peptide. Cystine bridges form between C26–C57 and C97–C114.

Belongs to the PBP/GOBP family. Post-translationally, N-glycosylated. In terms of tissue distribution, tubular accessory sex gland.

The protein resides in the secreted. Its function is as follows. May be a carrier protein for lipids. This is B2 protein from Tenebrio molitor (Yellow mealworm beetle).